We begin with the raw amino-acid sequence, 628 residues long: F-box only protein 21 (628 aa).

Residues 28–84 enclose the F-box domain; it reads SCLVNLPGEVLEYILCCGSLTAADIGRVSSTCRRLRELCQSSGKVWKEQFRVRWPSL.

In terms of assembly, directly interacts with SKP1 and CUL1.

In terms of biological role, substrate-recognition component of the SCF (SKP1-CUL1-F-box protein)-type E3 ubiquitin ligase complex. The chain is F-box only protein 21 (FBXO21) from Homo sapiens (Human).